Here is a 161-residue protein sequence, read N- to C-terminus: MAEKVEEYRGCVIPKDLYYDIENQVWFKVNEDGTVTVGVTDIGQARAGKIINIRIKPPGKYVKKGKPVASLESGKWAGPVPADIEGEVVERNEKLFDKPDLINEDPYGEGWIAKLKPANLERDLQDLVTGEEAVQKLKEYIEREDVNCGEERAQISKKFYK.

The Lipoyl-binding domain maps to 34 to 116 (TVTVGVTDIG…YGEGWIAKLK (83 aa)). Lys-75 is modified (N6-lipoyllysine).

This sequence belongs to the GcvH family. As to quaternary structure, the glycine cleavage system is composed of four proteins: P, T, L and H. It depends on (R)-lipoate as a cofactor.

Its function is as follows. The glycine cleavage system catalyzes the degradation of glycine. The H protein shuttles the methylamine group of glycine from the P protein to the T protein. The polypeptide is Glycine cleavage system H protein 2 (Aquifex aeolicus (strain VF5)).